Reading from the N-terminus, the 64-residue chain is Bactridin-2 (64 aa).

Residues 1-63 form the LCN-type CS-alpha/beta domain; the sequence is KDGYLVGNDG…TWNRATNRCG (63 aa). 4 cysteine pairs are disulfide-bonded: C11–C62, C15–C37, C23–C43, and C27–C45.

Belongs to the long (4 C-C) scorpion toxin superfamily. Sodium channel inhibitor family. Beta subfamily. Expressed by the venom gland.

It localises to the secreted. Its function is as follows. Shows antibacterial activity against both Gram-positive bacteria (B.subtilis, M.luteus, E.faecalis) and Gram-negative bacteria (P.aeruginosa, Y.enterocolitica, A.calcoaceticus). Modifies membrane sodium permeability on Y.enterocolitica. Is toxic to mice, but is not to crabs. Induces concentration dependent haemolysis in human erythrocytes. Acts by inhibiting the sodium (Nav) currents. In Tityus discrepans (Venezuelan scorpion), this protein is Bactridin-2.